Reading from the N-terminus, the 280-residue chain is MTNIHPTAIVEDGARIGNNVTIEPYAIVKKNVTLCDDVVVKSYAYIDGFTTIGRGTTVWPSAMIGNKPQDLKFKGEKTFVEIGEHCEIREFAMITSSTFEGTTVSIGNNCLIMPWAHIAHNCSVGNNVVFSTHVQLAGHVQVGDCVTIGSMVGVHQFVRIGSYSMVGAMSGIRRDIPPFTIGTGNPYALGGINKVGLQRRQVSFETRLALIKTFKRVFRSDESFQASLESVLEDFGEVPEVRHFVEFCRQPSKRGIERGVDCEASLEEPIDKKEGAFVES.

It belongs to the transferase hexapeptide repeat family. LpxA subfamily. Homotrimer.

Its subcellular location is the cytoplasm. The enzyme catalyses a (3R)-hydroxyacyl-[ACP] + UDP-N-acetyl-alpha-D-glucosamine = a UDP-3-O-[(3R)-3-hydroxyacyl]-N-acetyl-alpha-D-glucosamine + holo-[ACP]. It functions in the pathway glycolipid biosynthesis; lipid IV(A) biosynthesis; lipid IV(A) from (3R)-3-hydroxytetradecanoyl-[acyl-carrier-protein] and UDP-N-acetyl-alpha-D-glucosamine: step 1/6. Involved in the biosynthesis of lipid A, a phosphorylated glycolipid that anchors the lipopolysaccharide to the outer membrane of the cell. The protein is Acyl-[acyl-carrier-protein]--UDP-N-acetylglucosamine O-acyltransferase of Chlamydia trachomatis serovar A (strain ATCC VR-571B / DSM 19440 / HAR-13).